A 426-amino-acid chain; its full sequence is UPF0597 protein CLB_1750 (426 aa).

The protein belongs to the UPF0597 family.

The polypeptide is UPF0597 protein CLB_1750 (Clostridium botulinum (strain ATCC 19397 / Type A)).